The primary structure comprises 130 residues: Small ribosomal subunit protein uS11 (130 aa).

The protein belongs to the universal ribosomal protein uS11 family. In terms of assembly, part of the 30S ribosomal subunit. Interacts with proteins S7 and S18. Binds to IF-3.

In terms of biological role, located on the platform of the 30S subunit, it bridges several disparate RNA helices of the 16S rRNA. Forms part of the Shine-Dalgarno cleft in the 70S ribosome. This chain is Small ribosomal subunit protein uS11, found in Tropheryma whipplei (strain TW08/27) (Whipple's bacillus).